The following is a 332-amino-acid chain: 2,3-diketo-L-gulonate reductase (332 aa).

Catalysis depends on histidine 44, which acts as the Proton donor. NAD(+)-binding positions include 168 to 174, 224 to 225, and 304 to 306; these read ITMVDMS, WK, and GHE.

Belongs to the LDH2/MDH2 oxidoreductase family. DlgD subfamily. Homodimer.

It is found in the cytoplasm. It catalyses the reaction 3-dehydro-L-gulonate + NAD(+) = 2,3-dioxo-L-gulonate + NADH + H(+). The catalysed reaction is 3-dehydro-L-gulonate + NADP(+) = 2,3-dioxo-L-gulonate + NADPH + H(+). Its function is as follows. Catalyzes the reduction of 2,3-diketo-L-gulonate in the presence of NADH, to form 3-keto-L-gulonate. The polypeptide is 2,3-diketo-L-gulonate reductase (Escherichia coli O139:H28 (strain E24377A / ETEC)).